Consider the following 299-residue polypeptide: ATP phosphoribosyltransferase (299 aa).

The protein belongs to the ATP phosphoribosyltransferase family. Long subfamily. Mg(2+) serves as cofactor.

It localises to the cytoplasm. The enzyme catalyses 1-(5-phospho-beta-D-ribosyl)-ATP + diphosphate = 5-phospho-alpha-D-ribose 1-diphosphate + ATP. Its pathway is amino-acid biosynthesis; L-histidine biosynthesis; L-histidine from 5-phospho-alpha-D-ribose 1-diphosphate: step 1/9. Its activity is regulated as follows. Feedback inhibited by histidine. In terms of biological role, catalyzes the condensation of ATP and 5-phosphoribose 1-diphosphate to form N'-(5'-phosphoribosyl)-ATP (PR-ATP). Has a crucial role in the pathway because the rate of histidine biosynthesis seems to be controlled primarily by regulation of HisG enzymatic activity. The sequence is that of ATP phosphoribosyltransferase from Shewanella baltica (strain OS155 / ATCC BAA-1091).